The sequence spans 82 residues: Mitotic-spindle organizing protein 1 (82 aa).

The residue at position 2 (alanine 2) is an N-acetylalanine.

The protein belongs to the MOZART1 family. As to quaternary structure, associates with the gamma-tubulin ring complex (gTuRC) consisting of TUBGCP2, TUBGCP3, TUBGCP4, TUBGCP5 and TUBGCP6 and gamma-tubulin TUBG1 or TUBG2; within the complex, interacts with TUBGCP3 and TUBGCP6 to form a luminal bridge with actin that stabilizes the initial structure during complex assembly. Interacts with TUBG1.

It is found in the cytoplasm. Its subcellular location is the cytoskeleton. The protein localises to the microtubule organizing center. The protein resides in the centrosome. It localises to the spindle. Its function is as follows. Required for the recruitment and the assembly of the gamma-tubulin ring complex (gTuRC) at the centrosome. The gTuRC regulates the minus-end nucleation of alpha-beta tubulin heterodimers that grow into microtubule protafilaments, a critical step in centrosome duplication and spindle formation. This chain is Mitotic-spindle organizing protein 1 (MZT1), found in Homo sapiens (Human).